A 356-amino-acid polypeptide reads, in one-letter code: Carbohydrate sulfotransferase 10 (356 aa).

The Cytoplasmic segment spans residues 1-6; the sequence is MHHQWL. Residues 7 to 27 form a helical; Signal-anchor for type II membrane protein membrane-spanning segment; that stretch reads LLAACFWVIFMFMVASKFITL. Over 28–356 the chain is Lumenal; that stretch reads TFKDPDVYSA…GYQKPDFLLN (329 aa). Asparagine 99 carries an N-linked (GlcNAc...) asparagine glycan. Residues 127–133 and 189–197 contribute to the 3'-phosphoadenylyl sulfate site; these read PKVGNTQ and RDPFERLIS. Residues asparagine 228 and asparagine 316 are each glycosylated (N-linked (GlcNAc...) asparagine).

It belongs to the sulfotransferase 2 family. In terms of tissue distribution, in fetal tissues, it is predominantly expressed in brain, and weakly expressed in lung, kidney and liver. In adult, it is highly expressed in brain, testis, ovary, expressed at intermediate level in heart, pancreas, skeletal muscle, spleen and thymus, and weakly expressed in other tissues. In brain, it is expressed at higher level in the frontal lobe.

The protein localises to the golgi apparatus membrane. The catalysed reaction is 3-O-{beta-D-GlcA-(1-&gt;[3)-alpha-D-Xyl-(1-&gt;3)-beta-D-GlcA-(1-&gt;](n)-4)-beta-D-Xyl-(1-&gt;4)-Rib-ol-P-Rib-ol-P-3-beta-D-GalNAc-(1-&gt;3)-beta-D-GlcNAc-(1-&gt;4)-O-6-P-alpha-D-Man}-L-Thr-[protein] + 3'-phosphoadenylyl sulfate = 3-O-{O-3-S-beta-D-GlcA-(1-&gt;[3)-alpha-D-Xyl-(1-&gt;3)-beta-D-GlcA-(1-&gt;](n)-4)-beta-D-Xyl-(1-&gt;4)-Rib-ol-P-Rib-ol-P-3-beta-D-GalNAc-(1-&gt;3)-beta-D-GlcNAc-(1-&gt;4)-O-6-P-alpha-D-Man}-L-Thr-[protein] + adenosine 3',5'-bisphosphate + H(+). It carries out the reaction 17beta-estradiol 3-O-(beta-D-glucuronate) + 3'-phosphoadenylyl sulfate = 17beta-estradiol 3-O-(3-sulfo-beta-D-glucuronate) + adenosine 3',5'-bisphosphate + H(+). It catalyses the reaction 17beta-estradiol 3-O-(beta-D-glucuronate) 17-sulfate + 3'-phosphoadenylyl sulfate = 17beta-estradiol 3-O-(3-sulfo-beta-D-glucuronate) 17-sulfate + adenosine 3',5'-bisphosphate + H(+). The enzyme catalyses 17beta-estradiol 17-O-(beta-D-glucuronate) + 3'-phosphoadenylyl sulfate = 17beta-estradiol 17-O-(3-sulfo-beta-D-glucuronate) + adenosine 3',5'-bisphosphate + H(+). The catalysed reaction is 16alpha,17beta-estriol 3-O-(beta-D-glucuronate) + 3'-phosphoadenylyl sulfate = 16alpha,17beta-estriol 3-O-(3-sulfo-beta-D-glucuronate) + adenosine 3',5'-bisphosphate + H(+). It carries out the reaction 16alpha,17beta-estriol 16-O-(beta-D-glucuronate) + 3'-phosphoadenylyl sulfate = 16alpha,17beta-estriol 16-O-(3-sulfo-beta-D-glucuronate) + adenosine 3',5'-bisphosphate + H(+). It catalyses the reaction 16alpha,17beta-estriol 17-O-(beta-D-glucuronate) + 3'-phosphoadenylyl sulfate = 16alpha,17beta-estriol 17-O-(3-sulfo-beta-D-glucuronate) + adenosine 3',5'-bisphosphate + H(+). The enzyme catalyses estrone 3-O-(beta-D-glucuronate) + 3'-phosphoadenylyl sulfate = estrone 3-O-(3-sulfo-beta-D-glucuronate) + adenosine 3',5'-bisphosphate + H(+). The catalysed reaction is 3alpha,20alpha-dihydroxy-5beta-pregnane 3-O-(beta-D-glucuronate) + 3'-phosphoadenylyl sulfate = 3alpha,20alpha-dihydroxy-5beta-pregnane 3-O-(3-sulfo-beta-D-glucuronate) + adenosine 3',5'-bisphosphate + H(+). It carries out the reaction testosterone 17-O-(beta-D-glucuronate) + 3'-phosphoadenylyl sulfate = testosterone 17-O-(3-sulfo-beta-D-glucuronate) + adenosine 3',5'-bisphosphate + H(+). It catalyses the reaction 3beta-androst-5-en-17-one 3-O-(beta-D-glucuronate) + 3'-phosphoadenylyl sulfate = 3beta-androst-5-en-17-one 3-O-(3-sulfo-beta-D-glucuronate) + adenosine 3',5'-bisphosphate + H(+). The enzyme catalyses 3alpha,17alpha-dihydroxy-5beta-androstane-11-one-17beta-carboxylate 3-O-(beta-D-glucuronate) + 3'-phosphoadenylyl sulfate = 3alpha,17alpha-dihydroxy-5beta-androstane-11-one-17beta-carboxylate 3-O-(3-sulfo-beta-D-glucuronate) + adenosine 3',5'-bisphosphate + H(+). The catalysed reaction is 3alpha-hydroxyetiocholan-17-one 3-O-(beta-D-glucuronate) + 3'-phosphoadenylyl sulfate = 3alpha-hydroxyetiocholan-17-one 3-O-(3-sulfo-beta-D-glucuronate) + adenosine 3',5'-bisphosphate + H(+). It functions in the pathway steroid metabolism. The protein operates within protein modification; carbohydrate sulfation. Its function is as follows. Catalyzes the transfer of sulfate from 3'-phosphoadenylyl sulfate (PAPS) to position 3 of terminal glucuronic acid of both protein- and lipid-linked oligosaccharides. Participates in biosynthesis of HNK-1 carbohydrate structure 3-O-sulfo-beta-D-GlcA-(1-&gt;3)-beta-D-Gal-(1-&gt;4)-D-GlcNAc-R, a sulfated glucuronyl-lactosaminyl residue carried by many neural recognition molecules, which is involved in cell interactions during ontogenetic development and in synaptic plasticity in the adult. May be indirectly involved in synapse plasticity of the hippocampus, via its role in HNK-1 biosynthesis. Sulfates terminal glucuronyl residue of the laminin globular (LG)-domain binding epitope on DAG1/alpha-dystroglycan and prevents further polymerization by LARGE1 glycosyltransferase. Likely defines the chain length of LG epitope, conferring binding specificity to extracellular matrix components. Plays a role in down-regulating the steroid hormones. Sulfates glucuronidated estrogens and androgens with an impact in hormone cycle and fertility. Has a preference for glucuronyl moiety at the 3-hydroxyl group of a sterol ring rather than the 17-hydroxyl group, showing high catalytic efficiency for 17beta-estradiol 3-O-(beta-D-glucuronate) and dehydroepiandrosterone 3-O-(beta-D-glucuronate) hormones. The polypeptide is Carbohydrate sulfotransferase 10 (Homo sapiens (Human)).